The sequence spans 334 residues: MVHSKVVIIGSGAGAHTAAIYLSRAELQPVLYEGMLANGTAAGGQLTTTTDVENFPGFPSGIGGAELMDNMRAQSERFGTEIITETISKLDLSSRPFKMWTEWNDDEGSEPVRTADAVIIATGANARRLNLPGEETYWQNGISACAVCDGAVPIFRNKPLYVIGGGDSAAEEAMFLAKYGSSVTVLVRKDKLRASNIMADRLLAHPKCKVRFNTVATEVIGENKPNGLMTHLRVKDVLSNAEEVVEANGLFYAVGHDPASGLVKGQVELDDEGYIITKPGTSFTNVEGVFACGDVQDKRYRQAITSAGSGCVAALEAEKFIAETETHQEAKPVL.

Residues 11–14 (SGAG), 40–41 (TA), Q45, N54, C148, D294, and 301–303 (RQA) each bind FAD. A disulfide bond links C145 and C148.

Belongs to the class-II pyridine nucleotide-disulfide oxidoreductase family. In terms of assembly, homodimer. Requires FAD as cofactor.

The catalysed reaction is [thioredoxin]-dithiol + NADP(+) = [thioredoxin]-disulfide + NADPH + H(+). Its function is as follows. Component of the thioredoxin-thioredoxin reductase system which may be involved in biosynthesis of penicillins and cephalosporins and may be important in determining the thiol-disulfide redox balance. The sequence is that of Thioredoxin reductase (TRR1) from Penicillium chrysogenum (Penicillium notatum).